Reading from the N-terminus, the 155-residue chain is S-ribosylhomocysteine lyase (155 aa).

3 residues coordinate Fe cation: His-58, His-62, and Cys-125.

The protein belongs to the LuxS family. Homodimer. The cofactor is Fe cation.

The catalysed reaction is S-(5-deoxy-D-ribos-5-yl)-L-homocysteine = (S)-4,5-dihydroxypentane-2,3-dione + L-homocysteine. In terms of biological role, involved in the synthesis of autoinducer 2 (AI-2) which is secreted by bacteria and is used to communicate both the cell density and the metabolic potential of the environment. The regulation of gene expression in response to changes in cell density is called quorum sensing. Catalyzes the transformation of S-ribosylhomocysteine (RHC) to homocysteine (HC) and 4,5-dihydroxy-2,3-pentadione (DPD). This is S-ribosylhomocysteine lyase from Helicobacter pylori (strain P12).